A 50-amino-acid polypeptide reads, in one-letter code: Protein PsbN (50 aa).

A helical transmembrane segment spans residues 14 to 34; the sequence is VAVTILAILLALTGFGLWTAF.

Belongs to the PsbN family.

It localises to the cellular thylakoid membrane. Its function is as follows. May play a role in photosystem I and II biogenesis. This chain is Protein PsbN, found in Prochlorococcus marinus (strain MIT 9312).